Here is a 1089-residue protein sequence, read N- to C-terminus: Importin subunit beta-3 (1089 aa).

Serine 2 bears the N-acetylserine mark. HEAT repeat units follow at residues glutamate 6–isoleucine 39, isoleucine 44–alanine 78, lysine 96–cysteine 129, proline 138–threonine 165, isoleucine 175–glutamine 207, leucine 216–leucine 252, methionine 260–asparagine 295, glutamine 304–leucine 359, glycine 361–alanine 395, alanine 399–phenylalanine 439, proline 441–phenylalanine 481, lysine 484–alanine 524, asparagine 526–valine 568, glutamate 571–leucine 613, aspartate 615–leucine 689, glutamine 692–alanine 735, glutamate 742–methionine 781, glutamate 788–threonine 849, histidine 852–glycine 890, lysine 898–tyrosine 930, valine 938–tyrosine 978, aspartate 986–glutamate 1017, asparagine 1028–phenylalanine 1063, and serine 1066–alanine 1089. Threonine 830 is modified (phosphothreonine).

This sequence belongs to the importin beta family. Importin beta-3 subfamily. Interacts with Ran (GSP1); interacts specifically with the GTP-bound form of Ran (GTP-Ran), protecting it from GTP hydrolysis and nucleotide exchange. Interacts with RPL25; this interaction is dissociated by binding to Ran-GTP. Interacts with YAP1; this interaction is dissociated by binding to Ran-GTP. Interacts with NOP1; via its rg-NLS. Interacts with SOF1; via its cNLS. Interacts with histones H3 and H4; via their NLS. Interacts with ABF1.

The protein resides in the cytoplasm. The protein localises to the nucleus. Functions in nuclear protein import as nuclear transport receptor. Serves as receptor for classical and arginine/glycine-rich nuclear localization signals (cNLS and rg-NLS) in cargo substrates. Its predominant cargo substrate seems to be ribosomal proteins and ribosome biogenesis trans- and cis-acting factors. Required for nuclear transport of YAP1, NOP1 and SOF1. Mediates the nuclear import of histones H3 and H4. Mediates docking of the importin/substrate complex to the nuclear pore complex (NPC) through binding to repeat-containing nucleoporins. The complex is subsequently translocated through the pore by an energy requiring, Ran-dependent mechanism. At the nucleoplasmic side of the NPC, GTP-Ran binding leads to release of the cargo. The importin is re-exported from the nucleus to the cytoplasm where GTP hydrolysis releases Ran from importin. The directionality of nuclear import is thought to be conferred by an asymmetric distribution of the GTP- and GDP-bound forms of Ran between the cytoplasm and nucleus. Its function is as follows. Plays a role in protein secretion. This chain is Importin subunit beta-3, found in Saccharomyces cerevisiae (strain ATCC 204508 / S288c) (Baker's yeast).